Reading from the N-terminus, the 436-residue chain is 3-ketoacyl-CoA thiolase (436 aa).

Residue cysteine 99 is the Acyl-thioester intermediate of the active site. Catalysis depends on proton acceptor residues histidine 392 and cysteine 422.

It belongs to the thiolase-like superfamily. Thiolase family. Heterotetramer of two alpha chains (FadJ) and two beta chains (FadI).

It is found in the cytoplasm. It catalyses the reaction an acyl-CoA + acetyl-CoA = a 3-oxoacyl-CoA + CoA. The protein operates within lipid metabolism; fatty acid beta-oxidation. Its function is as follows. Catalyzes the final step of fatty acid oxidation in which acetyl-CoA is released and the CoA ester of a fatty acid two carbons shorter is formed. The chain is 3-ketoacyl-CoA thiolase from Escherichia coli O6:H1 (strain CFT073 / ATCC 700928 / UPEC).